The primary structure comprises 163 residues: Superoxide dismutase [Mn] (163 aa).

Mn(2+) is bound by residues His2, His50, Asp134, and His138.

Belongs to the iron/manganese superoxide dismutase family. It depends on Mn(2+) as a cofactor.

It catalyses the reaction 2 superoxide + 2 H(+) = H2O2 + O2. In terms of biological role, destroys superoxide anion radicals which are normally produced within the cells and which are toxic to biological systems. This is Superoxide dismutase [Mn] (sodA) from Mycobacterium kansasii.